We begin with the raw amino-acid sequence, 273 residues long: Tyrosinase (273 aa).

His38, His54, His63, His190, His194, and His216 together coordinate Cu cation.

Belongs to the tyrosinase family. Requires Cu(2+) as cofactor.

The catalysed reaction is 2 L-dopa + O2 = 2 L-dopaquinone + 2 H2O. It carries out the reaction L-tyrosine + O2 = L-dopaquinone + H2O. This is a copper-containing oxidase that functions in the formation of pigments such as melanins and other polyphenolic compounds. The sequence is that of Tyrosinase (melC2) from Streptomyces antibioticus.